The sequence spans 344 residues: Phenylalanine--tRNA ligase alpha subunit (344 aa).

A Mg(2+)-binding site is contributed by E256.

Belongs to the class-II aminoacyl-tRNA synthetase family. Phe-tRNA synthetase alpha subunit type 1 subfamily. As to quaternary structure, tetramer of two alpha and two beta subunits. Mg(2+) is required as a cofactor.

It is found in the cytoplasm. It catalyses the reaction tRNA(Phe) + L-phenylalanine + ATP = L-phenylalanyl-tRNA(Phe) + AMP + diphosphate + H(+). The chain is Phenylalanine--tRNA ligase alpha subunit from Geobacillus kaustophilus (strain HTA426).